Here is a 523-residue protein sequence, read N- to C-terminus: UDP-glucuronosyltransferase 2B16 (523 aa).

Residues 1–16 (LLLLLQLSCCFSSGSC) form the signal peptide. Residue lysine 129 is modified to N6-succinyllysine. A glycan (N-linked (GlcNAc...) asparagine) is linked at asparagine 309. The chain crosses the membrane as a helical span at residues 487–503 (VIGFLLACLTITTYLVI).

Belongs to the UDP-glycosyltransferase family.

Its subcellular location is the microsome membrane. It is found in the endoplasmic reticulum membrane. It carries out the reaction glucuronate acceptor + UDP-alpha-D-glucuronate = acceptor beta-D-glucuronoside + UDP + H(+). Functionally, UDPGT is of major importance in the conjugation and subsequent elimination of potentially toxic xenobiotics and endogenous compounds. Acts on small phenolic agents such as 2-beta-naphthol and 4-methylumbelliferone as well as bulky phenolic compounds like 2-hydroxy- and 4-hydroxybiphenyl. In contrast to 2B13 it is active toward 4-hydroxyesterone. This Oryctolagus cuniculus (Rabbit) protein is UDP-glucuronosyltransferase 2B16 (UGT2B16).